The sequence spans 799 residues: Rho GTPase-activating protein gacI (799 aa).

Positions I226–F451 constitute a Rho-GAP domain. Polar residues predominate over residues R472–D520. 2 disordered regions span residues R472 to N572 and E741 to Q799. Over residues D525–A549 the composition is skewed to low complexity. Pro residues predominate over residues T550–T568. Composition is skewed to low complexity over residues Q743–N752 and I759–S791.

The protein resides in the cytoplasm. Rho GTPase-activating protein involved in the signal transduction pathway. In Dictyostelium discoideum (Social amoeba), this protein is Rho GTPase-activating protein gacI (gacI).